A 286-amino-acid chain; its full sequence is Probable 4-deoxy-4-formamido-L-arabinose-phosphoundecaprenol deformylase ArnD (286 aa).

The NodB homology domain occupies 1 to 248; sequence MGTKLGVPNL…IAINEGINFC (248 aa).

The protein belongs to the polysaccharide deacetylase family. ArnD deformylase subfamily.

It catalyses the reaction 4-deoxy-4-formamido-alpha-L-arabinopyranosyl di-trans,octa-cis-undecaprenyl phosphate + H2O = 4-amino-4-deoxy-alpha-L-arabinopyranosyl di-trans,octa-cis-undecaprenyl phosphate + formate. The protein operates within glycolipid biosynthesis; 4-amino-4-deoxy-alpha-L-arabinose undecaprenyl phosphate biosynthesis; 4-amino-4-deoxy-alpha-L-arabinose undecaprenyl phosphate from UDP-4-deoxy-4-formamido-beta-L-arabinose and undecaprenyl phosphate: step 2/2. Its pathway is bacterial outer membrane biogenesis; lipopolysaccharide biosynthesis. In terms of biological role, catalyzes the deformylation of 4-deoxy-4-formamido-L-arabinose-phosphoundecaprenol to 4-amino-4-deoxy-L-arabinose-phosphoundecaprenol. The modified arabinose is attached to lipid A and is required for resistance to polymyxin and cationic antimicrobial peptides. In Wigglesworthia glossinidia brevipalpis, this protein is Probable 4-deoxy-4-formamido-L-arabinose-phosphoundecaprenol deformylase ArnD.